Here is a 337-residue protein sequence, read N- to C-terminus: Anthranilate phosphoribosyltransferase (337 aa).

Residues Gly81, 84–85 (GD), Ser89, 91–94 (NVST), 109–117 (KHGNRALSS), and Ala121 each bind 5-phospho-alpha-D-ribose 1-diphosphate. Gly81 provides a ligand contact to anthranilate. Position 93 (Ser93) interacts with Mg(2+). Residue Asn112 coordinates anthranilate. Arg167 lines the anthranilate pocket. Mg(2+) contacts are provided by Asp226 and Glu227.

The protein belongs to the anthranilate phosphoribosyltransferase family. Homodimer. Requires Mg(2+) as cofactor.

It carries out the reaction N-(5-phospho-beta-D-ribosyl)anthranilate + diphosphate = 5-phospho-alpha-D-ribose 1-diphosphate + anthranilate. The protein operates within amino-acid biosynthesis; L-tryptophan biosynthesis; L-tryptophan from chorismate: step 2/5. Its function is as follows. Catalyzes the transfer of the phosphoribosyl group of 5-phosphorylribose-1-pyrophosphate (PRPP) to anthranilate to yield N-(5'-phosphoribosyl)-anthranilate (PRA). This Bradyrhizobium sp. (strain BTAi1 / ATCC BAA-1182) protein is Anthranilate phosphoribosyltransferase.